We begin with the raw amino-acid sequence, 645 residues long: MEQINIQFPDGNKKAFDKGTTTEDIAQSISPGLRKKAVAGKFNGQLVDLTKPLETDGSIEIVTPGSEEALEVLRHSTAHLMAHAIKRLYGNVKFGVGPVIEGGFYYDFDIDQNISSDDFEQIEKTMKQIVNENMKIERKVVSRDEVKELFSNDEYKLELIDAIPEDENVTLYSQGDFTDLCRGVHVPSTAKIKEFKLLSTAGAYWRGDSNNKMLQRIYGTAFFDKKELKAHLQMLEERKERDHRKIGKELELFTNSQLVGAGLPLWLPNGATIRREIERYIVDKEVSMGYDHVYTPVLANVDLYKTSGHWDHYQEDMFPPMQLDETESMVLRPMNCPHHMMIYANKPHSYRELPIRIAELGTMHRYEASGAVSGLQRVRGMTLNDSHIFVRPDQIKEEFKRVVNMIIDVYKDFGFEDYSFRLSYRDPEDKEKYFDDDDMWNKAENMLKEAADELGLSYEEAIGEAAFYGPKLDVQVKTAMGKEETLSTAQLDFLLPERFDLTYIGQDGEHHRPVVIHRGVVSTMERFVAFLTEETKGAFPTWLAPKQVQIIPVNVDLHYDYARQLQDELKSQGVRVSIDDRNEKMGYKIREAQMQKIPYQIVVGDKEVENNQVNVRQYGSQDQETVEKDEFIWNLVDEIRLKKHR.

Positions 1–63 constitute a TGS domain; the sequence is MEQINIQFPD…ETDGSIEIVT (63 aa). The catalytic stretch occupies residues 242 to 540; sequence DHRKIGKELE…LTEETKGAFP (299 aa). Zn(2+)-binding residues include C336, H387, and H517.

Belongs to the class-II aminoacyl-tRNA synthetase family. As to quaternary structure, homodimer. Zn(2+) serves as cofactor.

The protein localises to the cytoplasm. It carries out the reaction tRNA(Thr) + L-threonine + ATP = L-threonyl-tRNA(Thr) + AMP + diphosphate + H(+). Its function is as follows. Catalyzes the attachment of threonine to tRNA(Thr) in a two-step reaction: L-threonine is first activated by ATP to form Thr-AMP and then transferred to the acceptor end of tRNA(Thr). Also edits incorrectly charged L-seryl-tRNA(Thr). The protein is Threonine--tRNA ligase of Staphylococcus aureus (strain NCTC 8325 / PS 47).